We begin with the raw amino-acid sequence, 469 residues long: D-3-phosphoglycerate dehydrogenase 1 (469 aa).

Phosphoserine is present on residues Ser22, Ser29, and Ser33. NAD(+) contacts are provided by residues 208–209 (HI), Asp228, 285–287 (ASR), and Asp311. Residue Arg287 is part of the active site. Glu316 is an active-site residue. The active-site Proton donor is the His347. 347–350 (HIGG) contributes to the NAD(+) binding site. In terms of domain architecture, ACT spans 399 to 469 (RVLYIHQNVP…SAKISIRLLY (71 aa)).

It belongs to the D-isomer specific 2-hydroxyacid dehydrogenase family.

It carries out the reaction (2R)-3-phosphoglycerate + NAD(+) = 3-phosphooxypyruvate + NADH + H(+). The catalysed reaction is (R)-2-hydroxyglutarate + NAD(+) = 2-oxoglutarate + NADH + H(+). It participates in amino-acid biosynthesis; L-serine biosynthesis; L-serine from 3-phospho-D-glycerate: step 1/3. Its function is as follows. Catalyzes the reversible oxidation of 3-phospho-D-glycerate to 3-phosphonooxypyruvate, the first step of the phosphorylated L-serine biosynthesis pathway. Also catalyzes the reversible oxidation of 2-hydroxyglutarate to 2-oxoglutarate. The protein is D-3-phosphoglycerate dehydrogenase 1 (SER3) of Saccharomyces cerevisiae (strain ATCC 204508 / S288c) (Baker's yeast).